Consider the following 500-residue polypeptide: uncharacterized protein (500 aa).

Residues 27 to 47 form a helical membrane-spanning segment; the sequence is IFALILIVFGFIIAPLLPGIF.

It localises to the membrane. This is an uncharacterized protein from Borreliella burgdorferi (strain ATCC 35210 / DSM 4680 / CIP 102532 / B31) (Borrelia burgdorferi).